The chain runs to 491 residues: COP9 signalosome complex subunit 1 (491 aa).

A PCI domain is found at 269–431 (CLLLASFDHC…KILYARDVDQ (163 aa)). Positions 465 to 491 (HVKSPPREGSQGELTPANSQSRMSTNM) are disordered. Ser-468 and Ser-474 each carry phosphoserine. Residues 476 to 491 (GELTPANSQSRMSTNM) are compositionally biased toward polar residues. Thr-479 is modified (phosphothreonine). Ser-483 is subject to Phosphoserine.

It belongs to the CSN1 family. In terms of assembly, component of the CSN complex, composed of COPS1/GPS1, COPS2, COPS3, COPS4, COPS5, COPS6, COPS7 (COPS7A or COPS7B), COPS8 and COPS9 isoform 1. In the complex, it probably interacts directly with COPS2, COPS3, COPS4 and COPS5. Interacts directly with inositol kinase ITPK1. Interacts with CAPN8. Interacts with USP48. Interacts with ASB4; this interaction negatively regulates GPS1. Widely expressed.

The protein localises to the cytoplasm. The protein resides in the nucleus. Functionally, essential component of the COP9 signalosome complex (CSN), a complex involved in various cellular and developmental processes. The CSN complex is an essential regulator of the ubiquitin (Ubl) conjugation pathway by mediating the deneddylation of the cullin subunits of SCF-type E3 ligase complexes, leading to decrease the Ubl ligase activity of SCF-type complexes such as SCF, CSA or DDB2. The complex is also involved in phosphorylation of p53/TP53, c-jun/JUN, IkappaBalpha/NFKBIA, ITPK1 and IRF8/ICSBP, possibly via its association with CK2 and PKD kinases. CSN-dependent phosphorylation of TP53 and JUN promotes and protects degradation by the Ubl system, respectively. Suppresses G-protein- and mitogen-activated protein kinase-mediated signal transduction. This is COP9 signalosome complex subunit 1 (GPS1) from Homo sapiens (Human).